We begin with the raw amino-acid sequence, 240 residues long: MTTNDAGRIPSAAGGAELAALYRLLTWLSPAFPIGGFSYSSGLEWAVEAGDICDAAALRGWLATMLTDGSGFCDAAFLVHAHRATELDDIKRLSEVAELAAAFVPSRERQLETAAQGRAFIEIARSAWSCAGLDEAVAQCDVVVYPVAVGMVGALHGVPLEPLLHGFLHALVSNWISAGSRLVPLGQTDSQRVLAALEPVVVATADRSLHASLDDIGSATFRADLASLRHETQYTRLFRS.

This sequence belongs to the UreF family. As to quaternary structure, ureD, UreF and UreG form a complex that acts as a GTP-hydrolysis-dependent molecular chaperone, activating the urease apoprotein by helping to assemble the nickel containing metallocenter of UreC. The UreE protein probably delivers the nickel.

It localises to the cytoplasm. Functionally, required for maturation of urease via the functional incorporation of the urease nickel metallocenter. This Bradyrhizobium sp. (strain ORS 278) protein is Urease accessory protein UreF.